Reading from the N-terminus, the 576-residue chain is A-type ATP synthase subunit A (576 aa).

228–235 (GGFGTGKT) is a binding site for ATP.

The protein belongs to the ATPase alpha/beta chains family. As to quaternary structure, has multiple subunits with at least A(3), B(3), C, D, E, F, H, I and proteolipid K(x).

It localises to the cell membrane. It carries out the reaction ATP + H2O + 4 H(+)(in) = ADP + phosphate + 5 H(+)(out). In terms of biological role, component of the A-type ATP synthase that produces ATP from ADP in the presence of a proton gradient across the membrane. The A chain is the catalytic subunit. This is A-type ATP synthase subunit A from Methanothrix thermoacetophila (strain DSM 6194 / JCM 14653 / NBRC 101360 / PT) (Methanosaeta thermophila).